The sequence spans 965 residues: Probable serine/threonine-protein kinase DDB_G0291516 (965 aa).

Positions 114 to 170 (KDSQKELLPSPQQLTPPTSLPSLPLLPLPQAPEQNEEQQLTQPPSPPSIPPPPPQKK) are disordered. Low complexity-rich tracts occupy residues 119 to 136 (ELLP…LPSL) and 144 to 155 (APEQNEEQQLTQ). Positions 156–168 (PPSPPSIPPPPPQ) are enriched in pro residues. ANK repeat units follow at residues 271-301 (KGET…HMGI) and 310-339 (LNKN…PLKM). The 281-residue stretch at 459–739 (IDFHTQIGSA…NVKAIKKEFL (281 aa)) folds into the Protein kinase domain. ATP-binding positions include 465–473 (IGSAGNASV) and K486. D587 serves as the catalytic Proton acceptor. A helical transmembrane segment spans residues 653–673 (IYSLGIILWELVCVAMTGTYI). Residues N760, N765, N905, N909, N910, N914, N934, and N938 are each glycosylated (N-linked (GlcNAc...) asparagine). A compositionally biased stretch (low complexity) spans 881–940 (NINKNKNNNNNNNNNNNNNNNINNNNTFNNSTNNNSNDNINIPYDFNNNNNNNNNSCNNS). Residues 881–942 (NINKNKNNNN…NNNSCNNSKK (62 aa)) are disordered.

The protein belongs to the protein kinase superfamily. Ser/Thr protein kinase family.

It is found in the membrane. It carries out the reaction L-seryl-[protein] + ATP = O-phospho-L-seryl-[protein] + ADP + H(+). The catalysed reaction is L-threonyl-[protein] + ATP = O-phospho-L-threonyl-[protein] + ADP + H(+). This is Probable serine/threonine-protein kinase DDB_G0291516 from Dictyostelium discoideum (Social amoeba).